Here is a 104-residue protein sequence, read N- to C-terminus: Ycf49-like protein (104 aa).

3 consecutive transmembrane segments (helical) span residues 6–26 (IPTWMVHVSSVIEWIVAIALV), 41–61 (LAWGMVPALVSATCACTWHFF), and 73–93 (LQALTTVIGNITLCLAAWWIY).

This sequence belongs to the ycf49 family.

The protein localises to the cell membrane. This is Ycf49-like protein from Synechocystis sp. (strain ATCC 27184 / PCC 6803 / Kazusa).